Consider the following 309-residue polypeptide: MTKKEIIILCGPTASGKSYLGHEFAKAYNGEIVNIDSMQVYKEISIITASPPKSYTAEVTYHLYNFLSITEDFSVVKYLKLATEKIKEITARGKLPILIGGTGLYINSLVFGYNNIPDISEDLREQVRNLHTEIGNIGLWNKLEELDTLAASKINQNDTQRLIRAYEVFLQTGKSIFSFQTLPKEQILSDFNFKIIFLNPERKFLYKTCDERLDKIFKEGAIDEIALIKKQFIPQDYSNLKAVGVKEILAYLDGNLTLDEALSAAQIRTRHYAKRQVTWFKKQIEDKTTLEYSNQEEFAQILNVIPAWH.

Residue 11-18 coordinates ATP; that stretch reads GPTASGKS. 13–18 is a substrate binding site; the sequence is TASGKS. Interaction with substrate tRNA stretches follow at residues 36–39 and 160–164; these read DSMQ and QRLIR.

It belongs to the IPP transferase family. In terms of assembly, monomer. Mg(2+) is required as a cofactor.

The catalysed reaction is adenosine(37) in tRNA + dimethylallyl diphosphate = N(6)-dimethylallyladenosine(37) in tRNA + diphosphate. Its function is as follows. Catalyzes the transfer of a dimethylallyl group onto the adenine at position 37 in tRNAs that read codons beginning with uridine, leading to the formation of N6-(dimethylallyl)adenosine (i(6)A). This chain is tRNA dimethylallyltransferase, found in Rickettsia felis (strain ATCC VR-1525 / URRWXCal2) (Rickettsia azadi).